A 155-amino-acid chain; its full sequence is Small ribosomal subunit protein uS7cz/uS7cy (155 aa).

Belongs to the universal ribosomal protein uS7 family. As to quaternary structure, part of the 30S ribosomal subunit.

The protein localises to the plastid. It is found in the chloroplast. Functionally, one of the primary rRNA binding proteins, it binds directly to 16S rRNA where it nucleates assembly of the head domain of the 30S subunit. This Nandina domestica (Heavenly bamboo) protein is Small ribosomal subunit protein uS7cz/uS7cy (rps7-A).